The primary structure comprises 152 residues: Transcriptional regulator MraZ (152 aa).

SpoVT-AbrB domains follow at residues 5 to 52 (ATLV…PLPE) and 81 to 124 (ASEC…DETT).

The protein belongs to the MraZ family. As to quaternary structure, forms oligomers.

It localises to the cytoplasm. Its subcellular location is the nucleoid. Functionally, negatively regulates its own expression and that of the subsequent genes in the proximal part of the division and cell wall (dcw) gene cluster. Acts by binding directly to DNA. May also regulate the expression of genes outside the dcw cluster. The polypeptide is Transcriptional regulator MraZ (Escherichia fergusonii (strain ATCC 35469 / DSM 13698 / CCUG 18766 / IAM 14443 / JCM 21226 / LMG 7866 / NBRC 102419 / NCTC 12128 / CDC 0568-73)).